Here is a 495-residue protein sequence, read N- to C-terminus: UDP-N-acetylmuramoyl-L-alanyl-D-glutamate--2,6-diaminopimelate ligase (495 aa).

UDP-N-acetyl-alpha-D-muramoyl-L-alanyl-D-glutamate is bound by residues leucine 27, serine 29, and 44–46 (HQA). Residue 116-122 (GTNGKTT) coordinates ATP. UDP-N-acetyl-alpha-D-muramoyl-L-alanyl-D-glutamate contacts are provided by residues asparagine 157, 158 to 159 (TT), serine 185, glutamine 191, and arginine 193. The residue at position 225 (lysine 225) is an N6-carboxylysine. Meso-2,6-diaminopimelate-binding positions include arginine 390, 414-417 (DNPR), glycine 465, and glutamate 469. The Meso-diaminopimelate recognition motif signature appears at 414–417 (DNPR).

Belongs to the MurCDEF family. MurE subfamily. Mg(2+) is required as a cofactor. Post-translationally, carboxylation is probably crucial for Mg(2+) binding and, consequently, for the gamma-phosphate positioning of ATP.

It localises to the cytoplasm. It catalyses the reaction UDP-N-acetyl-alpha-D-muramoyl-L-alanyl-D-glutamate + meso-2,6-diaminopimelate + ATP = UDP-N-acetyl-alpha-D-muramoyl-L-alanyl-gamma-D-glutamyl-meso-2,6-diaminopimelate + ADP + phosphate + H(+). It functions in the pathway cell wall biogenesis; peptidoglycan biosynthesis. Functionally, catalyzes the addition of meso-diaminopimelic acid to the nucleotide precursor UDP-N-acetylmuramoyl-L-alanyl-D-glutamate (UMAG) in the biosynthesis of bacterial cell-wall peptidoglycan. In Salmonella choleraesuis (strain SC-B67), this protein is UDP-N-acetylmuramoyl-L-alanyl-D-glutamate--2,6-diaminopimelate ligase.